A 184-amino-acid polypeptide reads, in one-letter code: MTYQQAGRVAVIKRIAGWLVFIPALLSTLISIINFVYLYSQKGTGVNAVMLDFIHVMTDMARFNTPFLNIFWYNSPVPNLEQGLSAGNIMFFIIYMLIFVGLSLQASGARMSRQVRHIREGIEDQMILERAKGNEGHSREQLEEKIVLPHHTIFLQFFTLYILPSVIGVLGYFVIKLLGIMIQG.

Transmembrane regions (helical) follow at residues 15–35 (IAGW…IINF), 84–104 (LSAG…GLSL), and 162–182 (ILPS…GIMI).

The protein to E.coli YniB.

It is found in the cell membrane. Functionally, putative regulator of YfeABCD, an ABC transporter locus involved in inorganic iron transport. The chain is Putative YfeABCD regulator YfeE (yfeE) from Yersinia pestis.